Reading from the N-terminus, the 490-residue chain is Cytochrome P450 2C9 (490 aa).

C435 contributes to the heme binding site.

The protein belongs to the cytochrome P450 family. Heme is required as a cofactor.

The protein localises to the endoplasmic reticulum membrane. Its subcellular location is the microsome membrane. It catalyses the reaction an organic molecule + reduced [NADPH--hemoprotein reductase] + O2 = an alcohol + oxidized [NADPH--hemoprotein reductase] + H2O + H(+). The enzyme catalyses (5Z,8Z,11Z,14Z)-eicosatetraenoate + reduced [NADPH--hemoprotein reductase] + O2 = (8R,9S)-epoxy-(5Z,11Z,14Z)-eicosatrienoate + oxidized [NADPH--hemoprotein reductase] + H2O + H(+). It carries out the reaction (5Z,8Z,11Z,14Z)-eicosatetraenoate + reduced [NADPH--hemoprotein reductase] + O2 = (8S,9R)-epoxy-(5Z,11Z,14Z)-eicosatrienoate + oxidized [NADPH--hemoprotein reductase] + H2O + H(+). The catalysed reaction is (5Z,8Z,11Z,14Z)-eicosatetraenoate + reduced [NADPH--hemoprotein reductase] + O2 = (11R,12S)-epoxy-(5Z,8Z,14Z)-eicosatrienoate + oxidized [NADPH--hemoprotein reductase] + H2O + H(+). It catalyses the reaction (5Z,8Z,11Z,14Z)-eicosatetraenoate + reduced [NADPH--hemoprotein reductase] + O2 = (11S,12R)-epoxy-(5Z,8Z,14Z)-eicosatrienoate + oxidized [NADPH--hemoprotein reductase] + H2O + H(+). The enzyme catalyses (5Z,8Z,11Z,14Z)-eicosatetraenoate + reduced [NADPH--hemoprotein reductase] + O2 = (14R,15S)-epoxy-(5Z,8Z,11Z)-eicosatrienoate + oxidized [NADPH--hemoprotein reductase] + H2O + H(+). It carries out the reaction (5Z,8Z,11Z,14Z)-eicosatetraenoate + reduced [NADPH--hemoprotein reductase] + O2 = (14S,15R)-epoxy-(5Z,8Z,11Z)-eicosatrienoate + oxidized [NADPH--hemoprotein reductase] + H2O + H(+). The catalysed reaction is (5Z,8Z,11Z,14Z,17Z)-eicosapentaenoate + reduced [NADPH--hemoprotein reductase] + O2 = 8,9-epoxy-(5Z,11Z,14Z,17Z)-eicosatetraenoate + oxidized [NADPH--hemoprotein reductase] + H2O + H(+). It catalyses the reaction (5Z,8Z,11Z,14Z,17Z)-eicosapentaenoate + reduced [NADPH--hemoprotein reductase] + O2 = 11,12-epoxy-(5Z,8Z,14Z,17Z)-eicosatetraenoate + oxidized [NADPH--hemoprotein reductase] + H2O + H(+). The enzyme catalyses (5Z,8Z,11Z,14Z,17Z)-eicosapentaenoate + reduced [NADPH--hemoprotein reductase] + O2 = 14,15-epoxy-(5Z,8Z,11Z,17Z)-eicosatetraenoate + oxidized [NADPH--hemoprotein reductase] + H2O + H(+). It carries out the reaction (5Z,8Z,11Z,14Z,17Z)-eicosapentaenoate + reduced [NADPH--hemoprotein reductase] + O2 = (17R,18S)-epoxy-(5Z,8Z,11Z,14Z)-eicosatetraenoate + oxidized [NADPH--hemoprotein reductase] + H2O + H(+). The catalysed reaction is cholesterol + reduced [NADPH--hemoprotein reductase] + O2 = 25-hydroxycholesterol + oxidized [NADPH--hemoprotein reductase] + H2O + H(+). It catalyses the reaction 17beta-estradiol + reduced [NADPH--hemoprotein reductase] + O2 = 2-hydroxy-17beta-estradiol + oxidized [NADPH--hemoprotein reductase] + H2O + H(+). The enzyme catalyses estrone + reduced [NADPH--hemoprotein reductase] + O2 = 2-hydroxyestrone + oxidized [NADPH--hemoprotein reductase] + H2O + H(+). It carries out the reaction (5Z,8Z,11Z,14Z)-eicosatetraenoate + reduced [NADPH--hemoprotein reductase] + O2 = (11R)-hydroxy-(5Z,8Z,12E,14Z)-eicosatetraenoate + oxidized [NADPH--hemoprotein reductase] + H2O + H(+). The catalysed reaction is (5Z,8Z,11Z,14Z)-eicosatetraenoate + reduced [NADPH--hemoprotein reductase] + O2 = (12R)-hydroxy-(5Z,8Z,10E,14Z)-eicosatetraenoate + oxidized [NADPH--hemoprotein reductase] + H2O + H(+). It catalyses the reaction (5Z,8Z,11Z,14Z)-eicosatetraenoate + reduced [NADPH--hemoprotein reductase] + O2 = (15R)-hydroxy-(5Z,8Z,11Z,13E)-eicosatetraenoate + oxidized [NADPH--hemoprotein reductase] + H2O + H(+). The enzyme catalyses (5Z,8Z,11Z,14Z)-eicosatetraenoate + reduced [NADPH--hemoprotein reductase] + O2 = 10-hydroxy-(5Z,8Z,11Z,14Z)-eicosatetraenoate + oxidized [NADPH--hemoprotein reductase] + H2O + H(+). It carries out the reaction (9Z,12Z)-octadecadienoate + reduced [NADPH--hemoprotein reductase] + O2 = (13R)-hydroxy-(9Z,11E)-octadecadienoate + oxidized [NADPH--hemoprotein reductase] + H2O + H(+). The catalysed reaction is (9Z,12Z)-octadecadienoate + reduced [NADPH--hemoprotein reductase] + O2 = (9R)-hydroxy-(10E,12Z)-octadecadienoate + oxidized [NADPH--hemoprotein reductase] + H2O + H(+). It catalyses the reaction (5Z,8Z,11Z,14Z)-eicosatetraenoate + reduced [NADPH--hemoprotein reductase] + O2 = 19-hydroxy-(5Z,8Z,11Z,14Z)-eicosatetraenoate + oxidized [NADPH--hemoprotein reductase] + H2O + H(+). The enzyme catalyses (5Z,8Z,11Z,14Z)-eicosatetraenoate + reduced [NADPH--hemoprotein reductase] + O2 = 13(S)-hydroxy-(5Z,8Z,11Z,14Z)-eicosatetraenoate + oxidized [NADPH--hemoprotein reductase] + H2O + H(+). It carries out the reaction (5Z,8Z,11Z,14Z)-eicosatetraenoate + reduced [NADPH--hemoprotein reductase] + O2 = 14,15-epoxy-(5Z,8Z,11Z)-eicosatrienoate + oxidized [NADPH--hemoprotein reductase] + H2O + H(+). The catalysed reaction is (5Z,8Z,11Z,14Z)-eicosatetraenoate + reduced [NADPH--hemoprotein reductase] + O2 = 11,12-epoxy-(5Z,8Z,14Z)-eicosatrienoate + oxidized [NADPH--hemoprotein reductase] + H2O + H(+). It catalyses the reaction (5Z,8Z,11Z,14Z)-eicosatetraenoate + reduced [NADPH--hemoprotein reductase] + O2 = 13-hydroxy-(5Z,8Z,11Z,14Z)-eicosatetraenoate + oxidized [NADPH--hemoprotein reductase] + H2O + H(+). The enzyme catalyses (4R)-limonene + reduced [NADPH--hemoprotein reductase] + O2 = (1R,5S)-carveol + oxidized [NADPH--hemoprotein reductase] + H2O + H(+). It carries out the reaction (4S)-limonene + reduced [NADPH--hemoprotein reductase] + O2 = (1S,5R)-carveol + oxidized [NADPH--hemoprotein reductase] + H2O + H(+). The catalysed reaction is (4S)-limonene + reduced [NADPH--hemoprotein reductase] + O2 = (4S)-perillyl alcohol + oxidized [NADPH--hemoprotein reductase] + H2O + H(+). The protein operates within lipid metabolism; arachidonate metabolism. It participates in steroid metabolism; cholesterol metabolism. Its pathway is terpene metabolism; (4R)-limonene degradation. A cytochrome P450 monooxygenase involved in the metabolism of various endogenous substrates, including fatty acids and steroids. Mechanistically, uses molecular oxygen inserting one oxygen atom into a substrate, and reducing the second into a water molecule, with two electrons provided by NADPH via cytochrome P450 reductase (NADPH--hemoprotein reductase). Catalyzes the epoxidation of double bonds of polyunsaturated fatty acids (PUFA). Catalyzes the hydroxylation of carbon-hydrogen bonds. Metabolizes cholesterol toward 25-hydroxycholesterol, a physiological regulator of cellular cholesterol homeostasis. Exhibits low catalytic activity for the formation of catechol estrogens from 17beta-estradiol (E2) and estrone (E1), namely 2-hydroxy E1 and E2. Catalyzes bisallylic hydroxylation and hydroxylation with double-bond migration of polyunsaturated fatty acids (PUFA). Also metabolizes plant monoterpenes such as limonene. Oxygenates (R)- and (S)-limonene to produce carveol and perillyl alcohol. Contributes to the wide pharmacokinetics variability of the metabolism of drugs such as S-warfarin, diclofenac, phenytoin, tolbutamide and losartan. This is Cytochrome P450 2C9 from Homo sapiens (Human).